The chain runs to 394 residues: 8-amino-7-oxononanoate synthase (394 aa).

Arg21 is a binding site for substrate. 112–113 (GY) is a pyridoxal 5'-phosphate binding site. His137 contributes to the substrate binding site. Ser183, His211, and Thr239 together coordinate pyridoxal 5'-phosphate. Position 242 is an N6-(pyridoxal phosphate)lysine (Lys242). Substrate is bound at residue Thr358.

Belongs to the class-II pyridoxal-phosphate-dependent aminotransferase family. BioF subfamily. In terms of assembly, homodimer. Pyridoxal 5'-phosphate is required as a cofactor.

It catalyses the reaction 6-carboxyhexanoyl-[ACP] + L-alanine + H(+) = (8S)-8-amino-7-oxononanoate + holo-[ACP] + CO2. It functions in the pathway cofactor biosynthesis; biotin biosynthesis. Functionally, catalyzes the decarboxylative condensation of pimeloyl-[acyl-carrier protein] and L-alanine to produce 8-amino-7-oxononanoate (AON), [acyl-carrier protein], and carbon dioxide. This Burkholderia pseudomallei (strain K96243) protein is 8-amino-7-oxononanoate synthase.